The primary structure comprises 336 residues: F420-dependent glucose-6-phosphate dehydrogenase (336 aa).

Asp-39 serves as a coordination point for coenzyme F420-(gamma-Glu)n. The Proton donor role is filled by His-40. Residues Thr-76 and 107–108 (TG) contribute to the coenzyme F420-(gamma-Glu)n site. The active-site Proton acceptor is the Glu-109. Residues Asn-112, 177 to 178 (GG), and 180 to 181 (EV) contribute to the coenzyme F420-(gamma-Glu)n site. Residues Thr-195, Lys-198, Lys-259, and Arg-283 each coordinate substrate.

It belongs to the F420-dependent glucose-6-phosphate dehydrogenase family. Homodimer.

The catalysed reaction is oxidized coenzyme F420-(gamma-L-Glu)(n) + D-glucose 6-phosphate + H(+) = 6-phospho-D-glucono-1,5-lactone + reduced coenzyme F420-(gamma-L-Glu)(n). Functionally, catalyzes the coenzyme F420-dependent oxidation of glucose 6-phosphate (G6P) to 6-phosphogluconolactone. Appears to have a role in resistance to oxidative stress, via its consumption of G6P that serves as a source of reducing power to combat oxidative stress in mycobacteria. In Mycobacterium leprae (strain Br4923), this protein is F420-dependent glucose-6-phosphate dehydrogenase.